The following is a 62-amino-acid chain: Photosystem II reaction center protein Z (62 aa).

Met1 carries the N-formylmethionine modification. The Lumenal segment spans residues Met1–Leu4. A helical membrane pass occupies residues Phe5–Val25. Residues Ala26–Ser36 lie on the Cytoplasmic side of the membrane. The chain crosses the membrane as a helical span at residues Lys37–Asn58. Residues Phe59–Val62 are Lumenal-facing.

The protein belongs to the PsbZ family. PSII is composed of 1 copy each of membrane proteins PsbA, PsbB, PsbC, PsbD, PsbE, PsbF, PsbH, PsbI, PsbJ, PsbK, PsbL, PsbM, PsbT, PsbX, PsbY, PsbZ, Psb30/Ycf12, peripheral proteins PsbO, CyanoQ (PsbQ), PsbU, PsbV and a large number of cofactors. It forms dimeric complexes. Part of a photosystem II (PSII) assembly intermediate complex PSII-I; crystallized from a strain deleted of psbJ, it forms monomeric PSII before addition of the oxygen evolving complex. PSII-I includes 3 assembly factors not found in mature PSII (Psb27, Psb28 and Psb34). Requires PSII binds multiple chlorophylls, carotenoids and specific lipids. as cofactor.

It is found in the cellular thylakoid membrane. Functionally, may control the interaction of photosystem II (PSII) cores with the light-harvesting antenna, regulates electron flow through the 2 photosystem reaction centers. PSII is a light-driven water plastoquinone oxidoreductase, using light energy to abstract electrons from H(2)O, generating a proton gradient subsequently used for ATP formation. Its function is as follows. May also aid in binding of PsbK, Psb30/Ycf12 and the oxygen-evolving complex to PSII, at least in vitro. The protein is Photosystem II reaction center protein Z of Thermosynechococcus vestitus (strain NIES-2133 / IAM M-273 / BP-1).